Here is a 129-residue protein sequence, read N- to C-terminus: MAKTPTRARKRVKKQVSDGIAHVHASFNNTIVTITDRQGNALSWATSGGSGFRGSRKSTPFAAQVAAERAGEIAKEYGVKNLEVMVKGPGPGRESSIRALNAAGFRITNITDVTPIPHNGCRPPKKRRV.

This sequence belongs to the universal ribosomal protein uS11 family. Part of the 30S ribosomal subunit. Interacts with proteins S7 and S18. Binds to IF-3.

Its function is as follows. Located on the platform of the 30S subunit, it bridges several disparate RNA helices of the 16S rRNA. Forms part of the Shine-Dalgarno cleft in the 70S ribosome. The chain is Small ribosomal subunit protein uS11 from Aeromonas hydrophila subsp. hydrophila (strain ATCC 7966 / DSM 30187 / BCRC 13018 / CCUG 14551 / JCM 1027 / KCTC 2358 / NCIMB 9240 / NCTC 8049).